A 267-amino-acid chain; its full sequence is Phosphoinositide-3-kinase-interacting protein 1 (267 aa).

A signal peptide spans 1 to 21 (MLLAWVHTFLLSNMLLAEAYG). Residues 22-172 (SGGCFWDNGH…NSKEKKDLGT (151 aa)) lie on the Extracellular side of the membrane. The 78-residue stretch at 24–101 (GCFWDNGHLY…EKRPCEDLRC (78 aa)) folds into the Kringle domain. 3 disulfide bridges follow: C25-C101, C46-C82, and C70-C96. Over residues 91–101 (PEKRPCEDLRC) the composition is skewed to basic and acidic residues. The tract at residues 91 to 122 (PEKRPCEDLRCPETTSQAPPPPPPSSTTELEE) is disordered. The helical transmembrane segment at 173 to 193 (LGYVLGVTMTVIIIAIGVGIV) threads the bilayer. Topologically, residues 194–267 (LGYTYKRGKD…LTDQAGTPGA (74 aa)) are cytoplasmic.

It is found in the cell membrane. Functionally, negative regulator of hepatic phosphatidylinositol 3-kinase (PI3K) activity. This is Phosphoinositide-3-kinase-interacting protein 1 (Pik3ip1) from Rattus norvegicus (Rat).